A 92-amino-acid chain; its full sequence is MTRSLRKGPFVASHLAKKVDAAVASNSNNIIKTWSRSSTILPTMVGLTIAVYNGKQHVPVYVSDQMVGHKLGEFSPTRTFRSHVKSDKKARR.

This sequence belongs to the universal ribosomal protein uS19 family.

It is found in the plastid. The protein resides in the chloroplast. In terms of biological role, protein S19 forms a complex with S13 that binds strongly to the 16S ribosomal RNA. This is Small ribosomal subunit protein uS19c from Rhodomonas salina (Cryptomonas salina).